The chain runs to 64 residues: Large ribosomal subunit protein bL35 (64 aa).

2 stretches are compositionally biased toward basic residues: residues 1 to 15 (MPKQ…KRFR) and 23 to 43 (VRQK…RTRR). The interval 1–64 (MPKQKSHSGA…AGRIKRLLAR (64 aa)) is disordered.

It belongs to the bacterial ribosomal protein bL35 family.

This chain is Large ribosomal subunit protein bL35, found in Frankia alni (strain DSM 45986 / CECT 9034 / ACN14a).